A 493-amino-acid chain; its full sequence is MALSRCLRTRTAFLSPLDQLNSSFYIRWSLVLHAKDRDKAVNRLSKGLNAVTSKLPFLKGRINYHTDTANNKIASASRAVISMSDDSPNLSLRELRPAKELPSLARIKQQGAPSHLFTDDLYSLPIFIDTTSKQSHPVLKTTYAPIEGGLILNICVHHGVMDGQGLATLTDLWASFTRQQDQNENEVQQPKNLPDPDEPLTRTARLATAINATADPEITDIETSLQRYRNDRILEQNIAASTGDSRKKTSRIFAFSSNKLKDAKEVLANNGCHVTTNSILNAAVWSNLTRVRLSRRTQLPPTPFARFTQMVDGRRQLLPKINKPGPYMGNVVLTSSADVSLDTLVATGFFNYLSVSLMAPVAQAIYDASRKVTTEYIDGFLKTLQKVDDPASLGIGSMSQHGVDFISTSVANAPFYECDFGPSLSEDSAGGKEGKPVFVRYPYIDWADGNMILLPRRRQPTENDETIEAYIMLAEDDLVALAEDPGFCSWLKE.

Residues 180–191 (QDQNENEVQQPK) show a composition bias toward polar residues. The tract at residues 180–199 (QDQNENEVQQPKNLPDPDEP) is disordered.

The protein operates within sesquiterpene biosynthesis; trichothecene biosynthesis. Trichothecene 8-O-acetyltransferase; part of 2-gene cluster involved in trichothecene C-8 modification that mediates the biosynthesis of T2-toxin. The biosynthesis of trichothecenes begins with the cyclization of farnesyl diphosphate to trichodiene and is catalyzed by the trichodiene synthase TRI5. Trichodiene undergoes a series of oxygenations catalyzed by the cytochrome P450 monooxygenase TRI4. TRI4 controls the addition of four oxygens at C-2, C-3, C-11, and the C-12, C-13-epoxide to form the intermediate isotrichotriol. Isotrichotriol then undergoes a non-enzymatic isomerization and cyclization to form isotrichodermol. During this process, the oxygen at the C-2 position becomes the pyran ring oxygen and the hydroxyl group at C-11 is lost. More complex type A trichothecenes are built by modifying isotrichodermol through a series of paired hydroxylation and acetylation or acylation steps. Isotrichodermol is converted to isotrichodermin by the acetyltransferase TRI101. TRI101 encodes a C-3 transacetylase that acts as a self-protection or resistance factor during biosynthesis and that the presence of a free C-3 hydroxyl group is a key component of Fusarium trichothecene phytotoxicity. A second hydroxyl group is added to C-15 by the trichothecene C-15 hydroxylase TRI11, producing 15-decalonectrin, which is then acetylated by TRI3, producing calonectrin. A third hydroxyl group is added at C-4 by the cytochrome P450 monooxygenase TRI13, converting calonectrin to 3,15-diacetoxyspirpenol, which is subsequently acetylated bythe acetyltransferase TRI7. A fourth hydroxyl group is added to C-8 by the cytochrome P450 monooxygenase TRI1, followed by the addition of an isovaleryl moiety by TRI16. Finally, the acetyl group is removed from the C-3 position by the trichothecene C-3 esterase TRI8 to produce T-2 toxin. The sequence is that of Trichothecene 8-O-acetyltransferase from Fusarium sporotrichioides.